A 186-amino-acid chain; its full sequence is Large ribosomal subunit protein bL9 (186 aa).

Positions 153-186 (ELRQVKSQSQKSQQQEAKQNEVGEATDSDKADQK) are disordered. Residues 157–169 (VKSQSQKSQQQEA) show a composition bias toward low complexity.

The protein belongs to the bacterial ribosomal protein bL9 family.

Its function is as follows. Binds to the 23S rRNA. The protein is Large ribosomal subunit protein bL9 of Wolbachia sp. subsp. Brugia malayi (strain TRS).